The following is a 255-amino-acid chain: uncharacterized protein (255 aa).

The N-terminal stretch at 1–22 (MNILSPIIIIIILIVLFYVMRM) is a signal peptide.

This is an uncharacterized protein from Acanthamoeba polyphaga (Amoeba).